The primary structure comprises 141 residues: Hemoglobin subunit alpha-D (141 aa).

The region spanning 1–141 (MLGAEETALV…VAAVLAEKYR (141 aa)) is the Globin domain. Histidine 58 and histidine 87 together coordinate heme b.

This sequence belongs to the globin family. Heterotetramer of two alpha-D chains and two beta chains. In terms of tissue distribution, red blood cells.

Its function is as follows. Involved in oxygen transport from the lung to the various peripheral tissues. This Phalacrocorax carbo (Great cormorant) protein is Hemoglobin subunit alpha-D (HBAD).